The sequence spans 472 residues: Alanine--anticapsin ligase (472 aa).

Glu109 contributes to the Mg(2+) binding site. Lys138 and Lys178 together coordinate ATP. The 214-residue stretch at 142-355 folds into the ATP-grasp domain; the sequence is RAAFNRAGVK…MAQLLLDVLC (214 aa). Residue Leu182 coordinates Mg(2+). ATP-binding positions include 184-185, 226-229, and Gln268; these read SS and EEFL. Residues Glu273 and 309 to 311 contribute to the substrate site; that span reads HTE. Residues Glu311 and Glu324 each coordinate Mg(2+). 328-331 lines the substrate pocket; sequence RFAG.

As to quaternary structure, monomer or homodimer. The cofactor is Mg(2+).

The enzyme catalyses L-anticapsin + L-alanine + ATP = bacilysin + ADP + phosphate + H(+). It functions in the pathway antibiotic biosynthesis; bacilysin biosynthesis. In terms of biological role, part of the bacABCDEFG operon responsible for the biosynthesis of bacilysin, an irreversible inactivator of the glutaminase domain of glucosamine synthetase. Catalyzes the formation of alpha-dipeptides from various L-amino acids in the presence of ATP. In vivo catalyzes the ligation of L-alanine and L-anticapsin (epoxycyclohexanonyl-Ala) to produce the final bacilysin antibiotic (L-Ala-L-4S-cyclohexenonyl-Ala dipeptide). In Bacillus amyloliquefaciens (Bacillus velezensis), this protein is Alanine--anticapsin ligase.